Reading from the N-terminus, the 316-residue chain is uncharacterized protein (316 aa).

4 helical membrane passes run Ile-74–Ile-94, Trp-99–Gly-119, Met-166–Gly-186, and Val-188–Phe-208.

The protein resides in the cell membrane. This is an uncharacterized protein from Synechocystis sp. (strain ATCC 27184 / PCC 6803 / Kazusa).